The chain runs to 460 residues: MSVKIFNSLTKQKEIFKPIESGKVKLYVCGMTVYDYMHIGHGRSWIIFDMVVRYLRMRGYEVTFVRNITDIDDKIIKRAGENKESPAALAERFIQILHEDEKALRVLSPDQEPRATQYVPEIIKLIQKLLDNQYAYTGQNGDVFFDVRRFKDYGKLSHRHLDELQAGARVEVSDSKRDPLDFVLWKKAKPGEPKWDSPWGEGRPGWHIECSAMSSSILGQPFDIHGGGLDLKFPHHENEIAQSEAGEEKPFVKLWMHAGLLEINKEKMSKSLGNIISIREALKESDVEVLRYFLLSGHYRNPLSYSKENLENGRLALERFYLALRGLPVVNHEKTSSYTDRFYEAMDDDFNTPIAFALLFEMVREINRFRDNNQIEKAAVLAAELKCLGNIFGLLQYSPEQFLQGAKKEADVQEIKKLIDQRNEARAKKDWKTADQIRDQLTDLGVAIEDSSDGTSWRQE.

Cys29 provides a ligand contact to Zn(2+). Positions 31–41 match the 'HIGH' region motif; it reads MTVYDYMHIGH. Zn(2+) is bound by residues Cys210, His235, and Glu239. A 'KMSKS' region motif is present at residues 267 to 271; sequence KMSKS. Lys270 is a binding site for ATP.

This sequence belongs to the class-I aminoacyl-tRNA synthetase family. Monomer. Requires Zn(2+) as cofactor.

It localises to the cytoplasm. The catalysed reaction is tRNA(Cys) + L-cysteine + ATP = L-cysteinyl-tRNA(Cys) + AMP + diphosphate. This is Cysteine--tRNA ligase from Coxiella burnetii (strain RSA 493 / Nine Mile phase I).